A 416-amino-acid polypeptide reads, in one-letter code: Gamma-glutamyl phosphate reductase (416 aa).

Belongs to the gamma-glutamyl phosphate reductase family.

Its subcellular location is the cytoplasm. It carries out the reaction L-glutamate 5-semialdehyde + phosphate + NADP(+) = L-glutamyl 5-phosphate + NADPH + H(+). Its pathway is amino-acid biosynthesis; L-proline biosynthesis; L-glutamate 5-semialdehyde from L-glutamate: step 2/2. Functionally, catalyzes the NADPH-dependent reduction of L-glutamate 5-phosphate into L-glutamate 5-semialdehyde and phosphate. The product spontaneously undergoes cyclization to form 1-pyrroline-5-carboxylate. In Streptococcus uberis (strain ATCC BAA-854 / 0140J), this protein is Gamma-glutamyl phosphate reductase.